We begin with the raw amino-acid sequence, 427 residues long: Mitochondrial distribution and morphology protein 12 (427 aa).

The region spanning Met1–Asn387 is the SMP-LTD domain. Residues Asn81–Asn96 are compositionally biased toward basic and acidic residues. Disordered regions lie at residues Asn81–Leu168 and Asn387–Glu427. A compositionally biased stretch (acidic residues) spans Leu106 to Asp133. Over residues Leu146–Ala161 the composition is skewed to polar residues. Residues Asn387 to Asp402 show a composition bias toward acidic residues. Residues Asn411–Glu427 are compositionally biased toward basic and acidic residues.

It belongs to the MDM12 family. Component of the ER-mitochondria encounter structure (ERMES) or MDM complex, composed of MMM1, MDM10, MDM12 and MDM34. An MMM1 homodimer associates with one molecule of MDM12 on each side in a pairwise head-to-tail manner, and the SMP-LTD domains of MMM1 and MDM12 generate a continuous hydrophobic tunnel for phospholipid trafficking.

It is found in the mitochondrion outer membrane. The protein localises to the endoplasmic reticulum membrane. Its function is as follows. Component of the ERMES/MDM complex, which serves as a molecular tether to connect the endoplasmic reticulum (ER) and mitochondria. Components of this complex are involved in the control of mitochondrial shape and protein biogenesis, and function in nonvesicular lipid trafficking between the ER and mitochondria. MDM12 is required for the interaction of the ER-resident membrane protein MMM1 and the outer mitochondrial membrane-resident beta-barrel protein MDM10. The MDM12-MMM1 subcomplex functions in the major beta-barrel assembly pathway that is responsible for biogenesis of all mitochondrial outer membrane beta-barrel proteins, and acts in a late step after the SAM complex. The MDM10-MDM12-MMM1 subcomplex further acts in the TOM40-specific pathway after the action of the MDM12-MMM1 complex. Essential for establishing and maintaining the structure of mitochondria and maintenance of mtDNA nucleoids. In Candida albicans (strain WO-1) (Yeast), this protein is Mitochondrial distribution and morphology protein 12.